A 133-amino-acid polypeptide reads, in one-letter code: Sporulation-specific protein 2 (133 aa).

Belongs to the VPS13 family. As to quaternary structure, interacts with spo13 and spo15.

The protein resides in the cytoplasm. It is found in the cytoskeleton. Its subcellular location is the microtubule organizing center. It localises to the spindle pole body. Involved in sporulation. Plays a significant role in modification of the spindle pole body prior to spore formation and is required for initiating forespore membrane formation. Assists in the localization of spo13 to the outer surface of the SPB. The polypeptide is Sporulation-specific protein 2 (spo2) (Schizosaccharomyces pombe (strain 972 / ATCC 24843) (Fission yeast)).